A 450-amino-acid chain; its full sequence is Phosphoglucosamine mutase (450 aa).

Ser-103 serves as the catalytic Phosphoserine intermediate. Ser-103, Asp-243, Asp-245, and Asp-247 together coordinate Mg(2+). Ser-103 is modified (phosphoserine).

The protein belongs to the phosphohexose mutase family. Mg(2+) serves as cofactor. In terms of processing, activated by phosphorylation.

The enzyme catalyses alpha-D-glucosamine 1-phosphate = D-glucosamine 6-phosphate. In terms of biological role, catalyzes the conversion of glucosamine-6-phosphate to glucosamine-1-phosphate. This Latilactobacillus sakei subsp. sakei (strain 23K) (Lactobacillus sakei subsp. sakei) protein is Phosphoglucosamine mutase.